Here is a 65-residue protein sequence, read N- to C-terminus: Sarcoplasmic/endoplasmic reticulum calcium ATPase regulator ARLN (65 aa).

M1 is subject to N-acetylmethionine. Residues 1–38 (MEVGQAASGTDGVRERRGSSAARRRSQDEPVQSGMNGI) are disordered. 2 positions are modified to phosphoserine: S19 and S26. Residues 44 to 64 (WLDLWLFILFDLALFIFVYLL) form a helical membrane-spanning segment.

Homooligomer. Can also form heterooligomers with other sarcoplasmic/endoplasmic reticulum calcium ATPase (SERCA) regulators ERLN, PLN, SLN and STRIT1/DWORF. Monomer. Interacts as a monomer with ATP2A2/SERCA2; the interaction results in inhibition of ATP2A2 Ca(2+) affinity.

It is found in the endoplasmic reticulum membrane. In terms of biological role, inhibits the activity of the calcium ATPases ATP2A2/SERCA2 and ATP2A3/SERCA3 by decreasing their apparent affinity for Ca(2+). This Rattus norvegicus (Rat) protein is Sarcoplasmic/endoplasmic reticulum calcium ATPase regulator ARLN (Arln).